We begin with the raw amino-acid sequence, 433 residues long: Histidinol dehydrogenase 2 (433 aa).

NAD(+) is bound by residues tyrosine 130, glutamine 192, and asparagine 215. 3 residues coordinate substrate: serine 238, glutamine 260, and histidine 263. Positions 260 and 263 each coordinate Zn(2+). Active-site proton acceptor residues include glutamate 328 and histidine 329. Substrate contacts are provided by histidine 329, aspartate 362, glutamate 416, and histidine 421. Aspartate 362 serves as a coordination point for Zn(2+). Histidine 421 lines the Zn(2+) pocket.

Belongs to the histidinol dehydrogenase family. Requires Zn(2+) as cofactor.

It catalyses the reaction L-histidinol + 2 NAD(+) + H2O = L-histidine + 2 NADH + 3 H(+). The protein operates within amino-acid biosynthesis; L-histidine biosynthesis; L-histidine from 5-phospho-alpha-D-ribose 1-diphosphate: step 9/9. Its function is as follows. Catalyzes the sequential NAD-dependent oxidations of L-histidinol to L-histidinaldehyde and then to L-histidine. This is Histidinol dehydrogenase 2 (hisD2) from Nostoc sp. (strain PCC 7120 / SAG 25.82 / UTEX 2576).